Here is a 212-residue protein sequence, read N- to C-terminus: MGTEFNGLFDEWAHTYDSFVQGEDIQYKEVFAHYEDILEDVVNKSFGNVLEFGVGTGNLTNKLLLAGRTVYGIEPSREMRTIAKEKLPKEFSITEGDFLSFEVPNSIDTIVSTYAFHHLTDDEKDVAIAKYSQLLNKGGKIVFADTIFADQDAYDKTVEAAKQRGFHQLANDLQTEYYTRIPIMQSIFENNGFHVTFTRLNHFVWVMEATKQ.

The S-adenosyl-L-methionine site is built by G53, E74, and D97.

It belongs to the methyltransferase superfamily. YrrT family.

Its function is as follows. Could be a S-adenosyl-L-methionine-dependent methyltransferase. This is an uncharacterized protein from Bacillus mycoides (strain KBAB4) (Bacillus weihenstephanensis).